The following is a 644-amino-acid chain: Macrolide export ATP-binding/permease protein MacB (644 aa).

The Cytoplasmic segment spans residues M1–S268. Residues I4–R242 enclose the ABC transporter domain. G40–S47 serves as a coordination point for ATP. Residues L269–G289 traverse the membrane as a helical segment. The Periplasmic segment spans residues N290–S523. The helical transmembrane segment at I524 to V544 threads the bilayer. The Cytoplasmic segment spans residues T545–V573. The helical transmembrane segment at L574 to F594 threads the bilayer. The Periplasmic portion of the chain corresponds to N595–T607. A helical membrane pass occupies residues A608–P628. The Cytoplasmic portion of the chain corresponds to A629–E644.

The protein belongs to the ABC transporter superfamily. Macrolide exporter (TC 3.A.1.122) family. As to quaternary structure, homodimer. Part of the tripartite efflux system MacAB-TdeA, which is composed of an inner membrane transporter, MacB, a periplasmic membrane fusion protein, MacA, and an outer membrane component, TdeA. The complex forms a large protein conduit and can translocate molecules across both the inner and outer membranes. Interacts with MacA.

It is found in the cell inner membrane. Part of the tripartite efflux system MacAB-TdeA. MacB is a non-canonical ABC transporter that contains transmembrane domains (TMD), which form a pore in the inner membrane, and an ATP-binding domain (NBD), which is responsible for energy generation. Confers resistance against macrolides. This chain is Macrolide export ATP-binding/permease protein MacB, found in Aggregatibacter actinomycetemcomitans (Actinobacillus actinomycetemcomitans).